Here is a 201-residue protein sequence, read N- to C-terminus: Probable nicotinate-nucleotide adenylyltransferase (201 aa).

This sequence belongs to the NadD family.

The catalysed reaction is nicotinate beta-D-ribonucleotide + ATP + H(+) = deamido-NAD(+) + diphosphate. Its pathway is cofactor biosynthesis; NAD(+) biosynthesis; deamido-NAD(+) from nicotinate D-ribonucleotide: step 1/1. In terms of biological role, catalyzes the reversible adenylation of nicotinate mononucleotide (NaMN) to nicotinic acid adenine dinucleotide (NaAD). This Carboxydothermus hydrogenoformans (strain ATCC BAA-161 / DSM 6008 / Z-2901) protein is Probable nicotinate-nucleotide adenylyltransferase.